Reading from the N-terminus, the 351-residue chain is Nuclear inhibitor of protein phosphatase 1 (351 aa).

Residues 1–142 form an interaction with CDC5L, SF3B1 and MELK region; sequence MAAAANSGSS…LPSAVKGDEK (142 aa). Residues 49–101 enclose the FHA domain; that stretch reads YLFGRNPDLCDFTIDHQSCSRVHAALVYHKHLKRVFLIDLNSTHGTFLGHIRL. The tract at residues 143-224 is interaction with EED; that stretch reads MGGEDDELKG…VDPSVGRFRN (82 aa). Residue Thr161 is modified to Phosphothreonine; by CK2; in vitro. At Ser178 the chain carries Phosphoserine; by PKA; in vitro. 2 consecutive short sequence motifs (nuclear localization signal) follow at residues 185 to 209 and 210 to 240; these read GNLD…DDEI and INPE…RVEG. The segment at 191–200 is involved in PP-1 inhibition; sequence RPKRKRKNSR. A Phosphoserine modification is found at Ser199. An involved in PP-1 binding region spans residues 200-203; it reads RVTF. Ser204 is subject to Phosphoserine. The residue at position 249 (Ser249) is a Phosphoserine. The residue at position 264 (Tyr264) is a Phosphotyrosine. Residues 310-329 form an interaction with EED region; the sequence is AVNMNPAPNPAVYNPEAVNE. The disordered stretch occupies residues 316 to 351; that stretch reads APNPAVYNPEAVNEPKKKKYAKEAWPGKKPTPSLLI. The tract at residues 330–351 is RNA-binding; the sequence is PKKKKYAKEAWPGKKPTPSLLI. Residues 331 to 337 are involved in PP-1 inhibition; sequence KKKKYAK. A Phosphotyrosine modification is found at Tyr335.

As to quaternary structure, interacts with phosphorylated CDC5L, SF3B1 and MELK. Interacts with EED. Part of a complex consisting of PPP1R8, EED, HDAC2 and PP-1. Part of the spliceosome. Interacts with PPP1CA, PPP1CB and PPP1CC. The N-terminus is blocked. In terms of processing, inactivated by phosphorylation on Ser-199 or Ser-204.

It localises to the nucleus. The protein localises to the nucleus speckle. Functionally, inhibitor subunit of the major nuclear protein phosphatase-1 (PP-1). It has RNA-binding activity but does not cleave RNA and may target PP-1 to RNA-associated substrates. May also be involved in pre-mRNA splicing. Binds DNA and might act as a transcriptional repressor. Seems to be required for cell proliferation. This Bos taurus (Bovine) protein is Nuclear inhibitor of protein phosphatase 1 (PPP1R8).